Here is a 263-residue protein sequence, read N- to C-terminus: Putative alpha/beta hydrolase L404 (263 aa).

Glycine 2 is lipidated: N-myristoyl glycine; by host.

It belongs to the AB hydrolase superfamily.

This chain is Putative alpha/beta hydrolase L404, found in Acanthamoeba polyphaga (Amoeba).